Reading from the N-terminus, the 106-residue chain is Pyrimidine/purine nucleoside phosphorylase (106 aa).

This sequence belongs to the nucleoside phosphorylase PpnP family.

It catalyses the reaction a purine D-ribonucleoside + phosphate = a purine nucleobase + alpha-D-ribose 1-phosphate. The enzyme catalyses adenosine + phosphate = alpha-D-ribose 1-phosphate + adenine. It carries out the reaction cytidine + phosphate = cytosine + alpha-D-ribose 1-phosphate. The catalysed reaction is guanosine + phosphate = alpha-D-ribose 1-phosphate + guanine. It catalyses the reaction inosine + phosphate = alpha-D-ribose 1-phosphate + hypoxanthine. The enzyme catalyses thymidine + phosphate = 2-deoxy-alpha-D-ribose 1-phosphate + thymine. It carries out the reaction uridine + phosphate = alpha-D-ribose 1-phosphate + uracil. The catalysed reaction is xanthosine + phosphate = alpha-D-ribose 1-phosphate + xanthine. Catalyzes the phosphorolysis of diverse nucleosides, yielding D-ribose 1-phosphate and the respective free bases. Can use uridine, adenosine, guanosine, cytidine, thymidine, inosine and xanthosine as substrates. Also catalyzes the reverse reactions. The chain is Pyrimidine/purine nucleoside phosphorylase from Burkholderia cenocepacia (strain ATCC BAA-245 / DSM 16553 / LMG 16656 / NCTC 13227 / J2315 / CF5610) (Burkholderia cepacia (strain J2315)).